The following is a 341-amino-acid chain: MSKANVGINGFGRIGRLVLRAAVEKDTVQVVAVNDPFITIDYMVYLFKYDSTHGQFKGTVTYDGDFLIVQKDGKSSHKIKVFNSKDPAAIAWGSVKADFVVESTGVFTTKEKASAHLQGGAKKVIISAPSADAPMYVVGVNHEKYDASNDHVISNASCTTNCLAPLAKVINDNFGIIEGLMTTVHAVTATQKTVDGPSGKLWRDGRGAGQNIIPASTGAAKAVGKVIPELNGKLTGMAFRVPTPDVSVVDLTVRLEKPASMDDIKKVVKAAADGPMKGILAYTEDQVVSTDFVSDPHSSIFDTGACISLNPNFVKLVSWYDNEYGYSNRVVDLIGYIATRG.

NAD(+) contacts are provided by residues 13–14 (RI), aspartate 35, and lysine 85. D-glyceraldehyde 3-phosphate contacts are provided by residues 157-159 (SCT), threonine 188, 217-218 (TG), and arginine 240. Cysteine 158 acts as the Nucleophile in catalysis. An NAD(+)-binding site is contributed by asparagine 322.

It belongs to the glyceraldehyde-3-phosphate dehydrogenase family. In terms of assembly, homotetramer.

The protein localises to the cytoplasm. It catalyses the reaction D-glyceraldehyde 3-phosphate + phosphate + NAD(+) = (2R)-3-phospho-glyceroyl phosphate + NADH + H(+). Its pathway is carbohydrate degradation; glycolysis; pyruvate from D-glyceraldehyde 3-phosphate: step 1/5. The protein is Glyceraldehyde-3-phosphate dehydrogenase 4 (gpd-4) of Caenorhabditis elegans.